The sequence spans 603 residues: Elongation factor 4 (603 aa).

The 185-residue stretch at 7 to 191 (DNIRNFSIVA…AIVTRLPPPK (185 aa)) folds into the tr-type G domain. GTP is bound by residues 19–24 (DHGKST) and 138–141 (NKVD).

This sequence belongs to the TRAFAC class translation factor GTPase superfamily. Classic translation factor GTPase family. LepA subfamily.

Its subcellular location is the cell inner membrane. It carries out the reaction GTP + H2O = GDP + phosphate + H(+). In terms of biological role, required for accurate and efficient protein synthesis under certain stress conditions. May act as a fidelity factor of the translation reaction, by catalyzing a one-codon backward translocation of tRNAs on improperly translocated ribosomes. Back-translocation proceeds from a post-translocation (POST) complex to a pre-translocation (PRE) complex, thus giving elongation factor G a second chance to translocate the tRNAs correctly. Binds to ribosomes in a GTP-dependent manner. In Rhodopseudomonas palustris (strain ATCC BAA-98 / CGA009), this protein is Elongation factor 4.